Here is an 827-residue protein sequence, read N- to C-terminus: MALVDPDIFNKDPREHYDLLQRLGGGTYGEVFKARDKVSKDLVALKMVKMEPDDDVATLQKEILMLKTCRHANIVAYHGSYLWLQKLWICMEFCGAGSLQDIYQVTGSLSELQISYVCREVLQGLAYLHSEKKIHRDIKGANILINDCGEVKLADFGISAQIGATLARRLSFIGTPYWMAPEVAAVALKGGYNELCDIWSLGITAIELAELQPPLFDVHPLRVLFLMTKSGYQPPRLKEKSRWSSSFHNFVKVTLTKNSKKRPSATKMLSHQLVSQPGLNRGLILDLLDKMKNPGKGLPVDIEDEEPEPPPAIPRRIRSTYRASSLGIPDADCCRRQMEFQRPRCVDCRPQAETVRLYPPAHFGSTSPRSQLSDSDDDYDDVDIPAPSENIPPPLPPKPKFRSPSDDGSGGIRDDGQLSPGVLVRCASGPPPRTPRPGPPPATCSPHLTARSDPSLWNPAAPEPGQPPLVPPRKEKMRGKMENEKRREKYPLLVKLFNGCPLQIHSTAAWTHPSTKDQNLLLGAEEGIFILNRNDQEATLEMIFPGRTTWLYCINNLLMSLSGKTPYLYSHSILGLLERKDGRTGSPIAHISPHRLLARKNMVSSKIQDTKGCRACCVAESASSGGPFLCGALETSVVLLQWYQPMNKFLLVRQVLFPLPTPLPVFTLLTTPGSELPAVCIGVSPGQAAKSVLFHTVRFGALSCWLDDSSTEHKGPVQVIQVKEDMVMVLMDGSLKLVTPEGAPAPGLRTPEIPMTEAVEAVAMVEDRLEAFWKHGVQVWAPGLKQPLQELRDPTLTFRLLCSPRPVVVETRPTDDPTAPSNLYIQE.

The 258-residue stretch at 17–274 folds into the Protein kinase domain; that stretch reads YDLLQRLGGG…ATKMLSHQLV (258 aa). ATP contacts are provided by residues 23 to 31 and Lys-46; that span reads LGGGTYGEV. Asp-137 serves as the catalytic Proton acceptor. Position 165 is a phosphothreonine; by autocatalysis (Thr-165). Residue Ser-171 is modified to Phosphoserine; by autocatalysis. Thr-175 bears the Phosphothreonine; by autocatalysis mark. Positions 296–315 are disordered; that stretch reads KGLPVDIEDEEPEPPPAIPR. Thr-354 is subject to Phosphothreonine; by autocatalysis. The tract at residues 359–485 is disordered; that stretch reads PPAHFGSTSP…KMRGKMENEK (127 aa). Ser-373, Ser-375, Ser-403, Ser-405, and Ser-419 each carry phosphoserine. Residues 374-383 show a composition bias toward acidic residues; the sequence is DSDDDYDDVD. 2 stretches are compositionally biased toward pro residues: residues 429–443 and 461–471; these read GPPP…PPAT and APEPGQPPLVP. A compositionally biased stretch (basic and acidic residues) spans 472–485; the sequence is PRKEKMRGKMENEK. A CNH domain is found at 501–806; sequence PLQIHSTAAW…TFRLLCSPRP (306 aa). Ser-592 is modified (phosphoserine).

It belongs to the protein kinase superfamily. STE Ser/Thr protein kinase family. STE20 subfamily. As to quaternary structure, interacts with MAP3K1. Interacts with FBXW8. Interacts with CLNK (via its SH2 domain). It depends on Mg(2+) as a cofactor. In terms of processing, autophosphorylates: phosphorylation promotes ubiquitination by the Cul7-RING(FBXW8) ubiquitin-protein ligase complex, leading to its degradation by the proteasome. Post-translationally, tyrosine-phosphorylated after activation of hemopoietic cells. Ubiquitinated by the Cul7-RING(FBXW8) ubiquitin-protein ligase complex following autophosphorylation, leading to its degradation by the proteasome. In terms of tissue distribution, expressed in hemopoietic cells (at protein level). Ubiquitously expressed in all tissues examined at embryonic stage 16.5 dpc with high levels in lung, heart and fetal liver. In the neonate, expression is restricted to the tissues which undergo lineage decisions, lung, thymus, liver, kidney and brain. In the adult, expression is limited to hemopoietic organs, thymus, bone marrow, and spleen and to the testis.

It catalyses the reaction L-seryl-[protein] + ATP = O-phospho-L-seryl-[protein] + ADP + H(+). The catalysed reaction is L-threonyl-[protein] + ATP = O-phospho-L-threonyl-[protein] + ADP + H(+). In terms of biological role, serine/threonine-protein kinase, which plays a role in the response to environmental stress. Appears to act upstream of the JUN N-terminal pathway. Activator of the Hippo signaling pathway which plays a pivotal role in organ size control and tumor suppression by restricting proliferation and promoting apoptosis. MAP4Ks act in parallel to and are partially redundant with STK3/MST2 and STK4/MST2 in the phosphorylation and activation of LATS1/2, and establish MAP4Ks as components of the expanded Hippo pathway. May play a role in hematopoietic lineage decisions and growth regulation. Together with CLNK, it enhances CD3-triggered activation of T-cells and subsequent IL2 production. In Mus musculus (Mouse), this protein is Mitogen-activated protein kinase kinase kinase kinase 1 (Map4k1).